The primary structure comprises 339 residues: Anthranilate phosphoribosyltransferase (339 aa).

Residues glycine 82, 85 to 86 (GD), 92 to 95 (NIST), 110 to 118 (KHGNRGISS), and serine 122 contribute to the 5-phospho-alpha-D-ribose 1-diphosphate site. Glycine 82 is a binding site for anthranilate. Serine 94 is a binding site for Mg(2+). Position 113 (asparagine 113) interacts with anthranilate. An anthranilate-binding site is contributed by arginine 168. 2 residues coordinate Mg(2+): aspartate 227 and glutamate 228.

The protein belongs to the anthranilate phosphoribosyltransferase family. Homodimer. The cofactor is Mg(2+).

The enzyme catalyses N-(5-phospho-beta-D-ribosyl)anthranilate + diphosphate = 5-phospho-alpha-D-ribose 1-diphosphate + anthranilate. The protein operates within amino-acid biosynthesis; L-tryptophan biosynthesis; L-tryptophan from chorismate: step 2/5. In terms of biological role, catalyzes the transfer of the phosphoribosyl group of 5-phosphorylribose-1-pyrophosphate (PRPP) to anthranilate to yield N-(5'-phosphoribosyl)-anthranilate (PRA). This Vesicomyosocius okutanii subsp. Calyptogena okutanii (strain HA) protein is Anthranilate phosphoribosyltransferase.